The following is a 204-amino-acid chain: UPF0637 protein SAR1080 (204 aa).

It belongs to the UPF0637 family.

This Staphylococcus aureus (strain MRSA252) protein is UPF0637 protein SAR1080.